A 415-amino-acid chain; its full sequence is 2-oxoadipate dioxygenase/decarboxylase (415 aa).

2-oxoadipate contacts are provided by H66, R70, and H225. H66 contacts Fe(2+). Positions 225 and 296 each coordinate Fe(2+). A361 provides a ligand contact to 2-oxoadipate.

It belongs to the 2-oxoadipate dioxygenase/decarboxylase family. Fe(2+) is required as a cofactor.

It catalyses the reaction 2-oxoadipate + O2 = (R)-2-hydroxyglutarate + CO2. Functionally, catalyzes the decarboxylation and hydroxylation of 2-oxoadipate (2OA) to form D-2-hydroxyglutarate (D-2-HGA). The protein is 2-oxoadipate dioxygenase/decarboxylase of Mycobacterium bovis (strain ATCC BAA-935 / AF2122/97).